Consider the following 213-residue polypeptide: uncharacterized protein (213 aa).

The CS domain maps to 2–91; that stretch reads SRHPEVKWAQ…AEAKWWKKLV (90 aa). Residues 168-213 are disordered; the sequence is GMGGMGGMDEFEDESDDEEEVSKPQDAEKAAEAGKSQESDAKAETS. The segment covering 176 to 187 has biased composition (acidic residues); the sequence is DEFEDESDDEEE. Residues 188–213 show a composition bias toward basic and acidic residues; the sequence is VSKPQDAEKAAEAGKSQESDAKAETS.

The protein belongs to the p23/wos2 family.

This is an uncharacterized protein from Oryza sativa subsp. japonica (Rice).